The primary structure comprises 182 residues: RNA pyrophosphohydrolase (182 aa).

Residues 6–149 (GYRPNVGIIL…KRLVYEQALN (144 aa)) form the Nudix hydrolase domain. Positions 38-59 (GGIKRGETPEEAMFRELYEEVG) match the Nudix box motif. Residues 162 to 182 (PRHKKEQEPFSDVVDSVRSEE) form a disordered region.

This sequence belongs to the Nudix hydrolase family. RppH subfamily. It depends on a divalent metal cation as a cofactor.

In terms of biological role, accelerates the degradation of transcripts by removing pyrophosphate from the 5'-end of triphosphorylated RNA, leading to a more labile monophosphorylated state that can stimulate subsequent ribonuclease cleavage. The chain is RNA pyrophosphohydrolase from Dechloromonas aromatica (strain RCB).